The following is a 2274-amino-acid chain: Adenomatous polyposis coli protein 2 (2274 aa).

Residues Met5–Gln59 adopt a coiled-coil conformation. 2 disordered regions span residues Gly97–Phe120 and Val248–Asn269. ARM repeat units follow at residues Pro301 to Asp341, Ala472 to Trp511, Ile515 to Ala555, Ser557 to Ser602, Glu608 to Ala647, and Pro650 to Ala689. Positions Ala832–Leu856 form a coiled coil. Disordered stretches follow at residues Ser859 to Ala901, Cys1061 to Gln1143, and Ser1165 to Phe1216. Residues Asp861–Asp870 are compositionally biased toward low complexity. Repeat 1 spans residues Leu1049–Ser1068. A 5 X 20 AA approximate repeat of F-X-V-E-X-T-P-X-C-F-S-R-X-S-S-L-S-S-L-S region spans residues Leu1049 to Ser1565. The tract at residues Leu1049–Ser1565 is interaction with CTNNB1. Polar residues predominate over residues Gln1077–Ser1086. The segment covering Glu1092–Ala1103 has biased composition (low complexity). Residues Thr1133 to Gln1143 are compositionally biased toward polar residues. Residues Asn1140 to Gly1159 form repeat 2. Copy 3 of the repeat occupies Phe1250–Ala1269. Disordered stretches follow at residues Glu1290–Asp1323, Arg1368–Leu1480, Phe1493–Pro1631, Ser1699–Pro2003, Pro2022–Glu2122, and Thr2135–Glu2274. The segment covering Thr1374–Gly1397 has biased composition (polar residues). Copy 4 of the repeat occupies Asp1375 to Thr1394. Residues Ser1399–Lys1411 show a composition bias toward basic and acidic residues. The span at Arg1455 to Arg1470 shows a compositional bias: polar residues. Positions Leu1517–Pro1529 are enriched in basic and acidic residues. Copy 5 of the repeat occupies Leu1546–Ser1565. Low complexity predominate over residues Ser1556–Ala1574. Ser1563 and Ser1565 each carry phosphoserine. Residues Pro1608 to Ala1624 are compositionally biased toward basic residues. Composition is skewed to low complexity over residues Ser1780 to Thr1795 and Leu1839 to Gly1868. Residues Ser1792 to Leu1871 are required for localization to microtubules and function in microtubule stabilization. The residue at position 1861 (Ser1861) is a Phosphoserine. The segment covering Arg1910–Glu1921 has biased composition (pro residues). 2 stretches are compositionally biased toward low complexity: residues Arg1945–Glu1955 and Leu1983–Ser1997. The interaction with MAPRE1 and MAPRE3 stretch occupies residues Gly2037–Thr2114. A compositionally biased stretch (polar residues) spans Asp2165–Leu2179.

This sequence belongs to the adenomatous polyposis coli (APC) family. Interacts with PSRC1. Interacts with MAPRE3. Interacts with APC, CTNNB1, TP53BP2, MAPRE1 and possibly with AXIN2. Expressed in brain and other neural tissues.

Its subcellular location is the cytoplasm. The protein localises to the cytoskeleton. It is found in the golgi apparatus. It localises to the perinuclear region. Stabilizes microtubules and may regulate actin fiber dynamics through the activation of Rho family GTPases. May also function in Wnt signaling by promoting the rapid degradation of CTNNB1. In Mus musculus (Mouse), this protein is Adenomatous polyposis coli protein 2 (Apc2).